A 236-amino-acid polypeptide reads, in one-letter code: uncharacterized protein (236 aa).

A run of 7 helical transmembrane segments spans residues 32–52 (MALA…VEPI), 61–81 (FGTI…MGFG), 90–110 (ILFW…ALIY), 115–135 (IART…YGYS), 144–164 (GSFF…NLFL), 167–187 (SSLS…LIAW), and 208–228 (LSIM…LYLM).

This sequence belongs to the BI1 family.

The protein localises to the cell membrane. This is an uncharacterized protein from Rickettsia prowazekii (strain Madrid E).